Reading from the N-terminus, the 560-residue chain is Cilia- and flagella-associated protein 184 (560 aa).

A compositionally biased stretch (basic and acidic residues) spans 1–12 (MEGGSEHTKDPG). Positions 1-209 (MEGGSEHTKD…QEEGKPLGGR (209 aa)) are disordered. 2 stretches are compositionally biased toward acidic residues: residues 41–61 (GELESEPEEEEEEEEEEEEEA) and 101–110 (EPEEPAEAGA). Basic and acidic residues-rich tracts occupy residues 127-144 (AEARAEELEQAAEGKEVR) and 179-209 (ETRRDGAESEGRAGEGRPAKSQEEGKPLGGR). 2 coiled-coil regions span residues 357-481 (QAAL…QGRD) and 510-536 (DSLLRDLEEKVDKTQLLHQRLESLKRH).

It belongs to the CFAP184 family. In terms of assembly, forms a complex with CFAP263; the interaction is required for functional activity in cilia.

The protein resides in the cell projection. It localises to the cilium. Its subcellular location is the cytoplasm. The protein localises to the cytoskeleton. It is found in the microtubule organizing center. The protein resides in the centrosome. Functionally, in complex with CFAP263, acts as a regulator of ciliary beating that connects radial spoke 3 (RS3) to the inner dynein arm (IDA) and the nexin-dynein regulatory complex (N-DRC). The complex is positioned parallel to N-DRC and forms a connection between the arch at the base of RS3, the IDA tail and N-DRC. This chain is Cilia- and flagella-associated protein 184 (CFAP184), found in Macaca fascicularis (Crab-eating macaque).